Reading from the N-terminus, the 1197-residue chain is Sensor protein EvgS (1197 aa).

The signal sequence occupies residues 1–21; it reads MKFLPYIFLLCCGLWSTISFA. At 22 to 325 the chain is on the cytoplasmic side; that stretch reads DEDYIEYRGI…SMTDENGSVR (304 aa). The helical transmembrane segment at 326–346 threads the bilayer; the sequence is GVMGDILNIITLQTGLNFSPI. At 347-537 the chain is on the periplasmic side; it reads TVSHNIHAGT…TWDLYSEQFY (191 aa). A helical membrane pass occupies residues 538 to 558; the sequence is IVTTLSVLLVGSSLLWGFYLL. Topologically, residues 559-1197 are cytoplasmic; that stretch reads RSVRRRKVIQ…EIAVFCQQNN (639 aa). Residues 718–938 form the Histidine kinase domain; it reads TMSHEIRTPI…TFTITIPVEI (221 aa). Residue histidine 721 is modified to Phosphohistidine; by autocatalysis. Residues 960 to 1074 enclose the Response regulatory domain; it reads SILIADDHPT…VLKTHLSQLH (115 aa). The residue at position 1009 (aspartate 1009) is a 4-aspartylphosphate. Residues 1098 to 1197 enclose the HPt domain; it reads DLQLMQEILM…EIAVFCQQNN (100 aa). Phosphohistidine is present on histidine 1137.

Activation requires a sequential transfer of a phosphate group from a His in the primary transmitter domain, to an Asp in the receiver domain and to a His in the secondary transmitter domain.

It localises to the cell inner membrane. It catalyses the reaction ATP + protein L-histidine = ADP + protein N-phospho-L-histidine.. Functionally, member of the two-component regulatory system EvgS/EvgA. Phosphorylates EvgA via a four-step phosphorelay in response to environmental signals. In Escherichia coli O157:H7, this protein is Sensor protein EvgS (evgS).